We begin with the raw amino-acid sequence, 148 residues long: 3-dehydroquinate dehydratase (148 aa).

Tyr23 serves as the catalytic Proton acceptor. Residues Asn75, His81, and Asp88 each contribute to the substrate site. Residue His101 is the Proton donor of the active site. Substrate is bound by residues 102–103 and Arg112; that span reads LS.

It belongs to the type-II 3-dehydroquinase family. In terms of assembly, homododecamer.

It carries out the reaction 3-dehydroquinate = 3-dehydroshikimate + H2O. It functions in the pathway metabolic intermediate biosynthesis; chorismate biosynthesis; chorismate from D-erythrose 4-phosphate and phosphoenolpyruvate: step 3/7. In terms of biological role, catalyzes a trans-dehydration via an enolate intermediate. The polypeptide is 3-dehydroquinate dehydratase (Halorhodospira halophila (strain DSM 244 / SL1) (Ectothiorhodospira halophila (strain DSM 244 / SL1))).